A 234-amino-acid polypeptide reads, in one-letter code: Ubiquitin carboxyl-terminal hydrolase 3 (234 aa).

One can recognise a UCH catalytic domain in the interval 12-232 (RWLPLESNPD…LNFNLIAISK (221 aa)). C101 acts as the Nucleophile in catalysis. H172 serves as the catalytic Proton donor.

Belongs to the peptidase C12 family.

The catalysed reaction is Thiol-dependent hydrolysis of ester, thioester, amide, peptide and isopeptide bonds formed by the C-terminal Gly of ubiquitin (a 76-residue protein attached to proteins as an intracellular targeting signal).. The polypeptide is Ubiquitin carboxyl-terminal hydrolase 3 (Arabidopsis thaliana (Mouse-ear cress)).